Consider the following 407-residue polypeptide: Imidazolonepropionase (407 aa).

Residues His74 and His76 each coordinate Fe(3+). Zn(2+) contacts are provided by His74 and His76. Residues Arg83, Tyr146, and His179 each contribute to the 4-imidazolone-5-propanoate site. Position 146 (Tyr146) interacts with N-formimidoyl-L-glutamate. Residue His244 participates in Fe(3+) binding. A Zn(2+)-binding site is contributed by His244. Residue Gln247 participates in 4-imidazolone-5-propanoate binding. Asp319 contacts Fe(3+). Asp319 serves as a coordination point for Zn(2+). Positions 321 and 323 each coordinate N-formimidoyl-L-glutamate. Residue Thr324 coordinates 4-imidazolone-5-propanoate.

Belongs to the metallo-dependent hydrolases superfamily. HutI family. Zn(2+) serves as cofactor. Requires Fe(3+) as cofactor.

Its subcellular location is the cytoplasm. The catalysed reaction is 4-imidazolone-5-propanoate + H2O = N-formimidoyl-L-glutamate. It functions in the pathway amino-acid degradation; L-histidine degradation into L-glutamate; N-formimidoyl-L-glutamate from L-histidine: step 3/3. Catalyzes the hydrolytic cleavage of the carbon-nitrogen bond in imidazolone-5-propanoate to yield N-formimidoyl-L-glutamate. It is the third step in the universal histidine degradation pathway. In Salmonella paratyphi C (strain RKS4594), this protein is Imidazolonepropionase.